The chain runs to 176 residues: Nudix hydrolase 18, mitochondrial (176 aa).

The transit peptide at 1 to 21 directs the protein to the mitochondrion; sequence MVCLVSRTGRQSQRYNKGRRQ. One can recognise a Nudix hydrolase domain in the interval 22–153; the sequence is VVGCIPYRLK…WMKEALDVLV (132 aa). A Nudix box motif is present at residues 60-81; that stretch reads GGWELDESVEEAASRESLEEAG. 2 residues coordinate Mg(2+): E75 and E79.

Belongs to the Nudix hydrolase family. Mg(2+) is required as a cofactor. Requires Mn(2+) as cofactor. In terms of tissue distribution, expressed in roots, stems and inflorescences.

It is found in the mitochondrion. Its function is as follows. Probably mediates the hydrolysis of some nucleoside diphosphate derivatives. This chain is Nudix hydrolase 18, mitochondrial (NUDT18), found in Arabidopsis thaliana (Mouse-ear cress).